Consider the following 267-residue polypeptide: Nus factor SuhB (267 aa).

Residues glutamate 67, aspartate 84, and leucine 86 each contribute to the Mg(2+) site. Glutamate 67 contributes to the substrate binding site. Substrate contacts are provided by residues 86 to 89 (LDGT), arginine 183, and aspartate 212.

Belongs to the inositol monophosphatase superfamily. Homodimer. The rRNA transcription and antitermination complex (rrnTAC) consists of RNA polymerase (RNAP), NusA, NusB, NusE (rpsJ), NusG, SubB, ribosomal protein S4, DNA and precursor rRNA; S4 is more flexible than other subunits. The cofactor is Mg(2+).

The protein localises to the cytoplasm. The catalysed reaction is a myo-inositol phosphate + H2O = myo-inositol + phosphate. In terms of biological role, part of the processive rRNA transcription and antitermination complex (rrnTAC). The complex forms an RNA-chaperone ring around the RNA exit tunnel of RNA polymerase (RNAP). It supports rapid transcription and antitermination of rRNA operons, cotranscriptional rRNA folding, and annealing of distal rRNA regions to allow correct ribosome biogenesis. This subunit may play a central role in organizing the structure. IMPase activity is not required for its Nus factor function. The chain is Nus factor SuhB (suhB) from Escherichia coli O157:H7.